The sequence spans 183 residues: NAD(P)H-quinone oxidoreductase subunit I, chloroplastic (183 aa).

4Fe-4S ferredoxin-type domains follow at residues 55 to 84 (GRIHFEFDKCIACEVCVRVCPINLPVVDWK) and 95 to 124 (KSYSIDFGVCIFCGNCVEYCPTNCLSMTEE). The [4Fe-4S] cluster site is built by C64, C67, C70, C74, C104, C107, C110, and C114.

Belongs to the complex I 23 kDa subunit family. NDH is composed of at least 16 different subunits, 5 of which are encoded in the nucleus. [4Fe-4S] cluster is required as a cofactor.

The protein resides in the plastid. The protein localises to the chloroplast thylakoid membrane. The catalysed reaction is a plastoquinone + NADH + (n+1) H(+)(in) = a plastoquinol + NAD(+) + n H(+)(out). The enzyme catalyses a plastoquinone + NADPH + (n+1) H(+)(in) = a plastoquinol + NADP(+) + n H(+)(out). In terms of biological role, NDH shuttles electrons from NAD(P)H:plastoquinone, via FMN and iron-sulfur (Fe-S) centers, to quinones in the photosynthetic chain and possibly in a chloroplast respiratory chain. The immediate electron acceptor for the enzyme in this species is believed to be plastoquinone. Couples the redox reaction to proton translocation, and thus conserves the redox energy in a proton gradient. This Anthoceros angustus (Hornwort) protein is NAD(P)H-quinone oxidoreductase subunit I, chloroplastic.